A 478-amino-acid polypeptide reads, in one-letter code: DNA gyrase subunit B (478 aa).

The Toprim domain occupies 319–438 (CEIYLVEGDS…GGHVYIAQPP (120 aa)). Mg(2+) contacts are provided by Glu325, Asp403, and Asp405.

Belongs to the type II topoisomerase GyrB family. In terms of assembly, heterotetramer, composed of two GyrA and two GyrB chains. In the heterotetramer, GyrA contains the active site tyrosine that forms a transient covalent intermediate with DNA, while GyrB binds cofactors and catalyzes ATP hydrolysis. The cofactor is Mg(2+). Mn(2+) serves as cofactor. It depends on Ca(2+) as a cofactor.

It is found in the cytoplasm. The catalysed reaction is ATP-dependent breakage, passage and rejoining of double-stranded DNA.. Functionally, a type II topoisomerase that negatively supercoils closed circular double-stranded (ds) DNA in an ATP-dependent manner to modulate DNA topology and maintain chromosomes in an underwound state. Negative supercoiling favors strand separation, and DNA replication, transcription, recombination and repair, all of which involve strand separation. Also able to catalyze the interconversion of other topological isomers of dsDNA rings, including catenanes and knotted rings. Type II topoisomerases break and join 2 DNA strands simultaneously in an ATP-dependent manner. The protein is DNA gyrase subunit B (gyrB) of Cytophaga aurantiaca.